The chain runs to 116 residues: Small ribosomal subunit protein uS10m (116 aa).

This sequence belongs to the universal ribosomal protein uS10 family.

It localises to the mitochondrion. The polypeptide is Small ribosomal subunit protein uS10m (RPS10) (Reclinomonas americana).